The primary structure comprises 153 residues: Ribosome maturation factor RimP (153 aa).

It belongs to the RimP family.

The protein resides in the cytoplasm. Its function is as follows. Required for maturation of 30S ribosomal subunits. This Psychromonas ingrahamii (strain DSM 17664 / CCUG 51855 / 37) protein is Ribosome maturation factor RimP.